The following is a 201-amino-acid chain: 3-isopropylmalate dehydratase small subunit (201 aa).

It belongs to the LeuD family. LeuD type 1 subfamily. Heterodimer of LeuC and LeuD.

The catalysed reaction is (2R,3S)-3-isopropylmalate = (2S)-2-isopropylmalate. It functions in the pathway amino-acid biosynthesis; L-leucine biosynthesis; L-leucine from 3-methyl-2-oxobutanoate: step 2/4. Catalyzes the isomerization between 2-isopropylmalate and 3-isopropylmalate, via the formation of 2-isopropylmaleate. The sequence is that of 3-isopropylmalate dehydratase small subunit from Shigella boydii serotype 18 (strain CDC 3083-94 / BS512).